Here is a 272-residue protein sequence, read N- to C-terminus: Putative phosphoenolpyruvate synthase regulatory protein (272 aa).

152–159 (GVSRCGKT) contributes to the ADP binding site.

It belongs to the pyruvate, phosphate/water dikinase regulatory protein family. PSRP subfamily.

It carries out the reaction [pyruvate, water dikinase] + ADP = [pyruvate, water dikinase]-phosphate + AMP + H(+). The enzyme catalyses [pyruvate, water dikinase]-phosphate + phosphate + H(+) = [pyruvate, water dikinase] + diphosphate. Functionally, bifunctional serine/threonine kinase and phosphorylase involved in the regulation of the phosphoenolpyruvate synthase (PEPS) by catalyzing its phosphorylation/dephosphorylation. The sequence is that of Putative phosphoenolpyruvate synthase regulatory protein from Pseudomonas putida (strain W619).